The sequence spans 198 residues: Recombination protein RecR (198 aa).

A C4-type zinc finger spans residues 56 to 71; the sequence is CKVCGNFSEEDECVIC. The region spanning 79–174 is the Toprim domain; it reads GVICVVEEPK…RVSKLASGLP (96 aa).

It belongs to the RecR family.

Functionally, may play a role in DNA repair. It seems to be involved in an RecBC-independent recombinational process of DNA repair. It may act with RecF and RecO. In Tropheryma whipplei (strain Twist) (Whipple's bacillus), this protein is Recombination protein RecR.